The primary structure comprises 235 residues: RNA-free ribonuclease P (235 aa).

This sequence belongs to the HARP family.

It catalyses the reaction Endonucleolytic cleavage of RNA, removing 5'-extranucleotides from tRNA precursor.. Its function is as follows. RNA-free RNase P that catalyzes the removal of the 5'-leader sequence from pre-tRNA to produce the mature 5'-terminus. In Methanothrix thermoacetophila (strain DSM 6194 / JCM 14653 / NBRC 101360 / PT) (Methanosaeta thermophila), this protein is RNA-free ribonuclease P.